The chain runs to 72 residues: Translation initiation factor IF-1 2 (72 aa).

The S1-like domain occupies 1-72; that stretch reads MSKDDVIEVE…TRGRIVYRYK (72 aa).

This sequence belongs to the IF-1 family. Component of the 30S ribosomal translation pre-initiation complex which assembles on the 30S ribosome in the order IF-2 and IF-3, IF-1 and N-formylmethionyl-tRNA(fMet); mRNA recruitment can occur at any time during PIC assembly.

It is found in the cytoplasm. One of the essential components for the initiation of protein synthesis. Stabilizes the binding of IF-2 and IF-3 on the 30S subunit to which N-formylmethionyl-tRNA(fMet) subsequently binds. Helps modulate mRNA selection, yielding the 30S pre-initiation complex (PIC). Upon addition of the 50S ribosomal subunit IF-1, IF-2 and IF-3 are released leaving the mature 70S translation initiation complex. This chain is Translation initiation factor IF-1 2, found in Symbiobacterium thermophilum (strain DSM 24528 / JCM 14929 / IAM 14863 / T).